The sequence spans 931 residues: Histone-lysine N-methyltransferase EZ1 (931 aa).

Positions 1-30 (MEAEAAAAVVASSASASASAGRSRPSSSAA) are enriched in low complexity. 3 disordered regions span residues 1–37 (MEAE…SNSA), 372–450 (PTHS…ITNR), and 491–549 (RNGN…YDSS). A compositionally biased stretch (polar residues) spans 375 to 385 (SSDNVMNQPGS). Residues 386 to 398 (NRKKNGSSGRKTK) show a composition bias toward basic residues. Polar residues predominate over residues 423–433 (SNKSPQHSPSP). Positions 500–509 (SSQQSSPSTR) are enriched in low complexity. Residues 528-549 (AHNDSTEEANNRHSATDGYDSS) show a composition bias toward basic and acidic residues. The SANT domain maps to 565–615 (YLRSWKAIEQGLLVKGLEIFGRNSCLIARNLLGGMKTCKDVFQYMNYIENN). Residues 664 to 763 (FKRITERKDQ…TLGVPNQRGD (100 aa)) enclose the CXC domain. The SET domain maps to 778 to 893 (QRVLLGRSDV…AGEELFYDYR (116 aa)). A compositionally biased stretch (basic and acidic residues) spans 903 to 915 (ARKPEASGAKDDG). The disordered stretch occupies residues 903 to 931 (ARKPEASGAKDDGQPFNGRAKKLAQNNRG).

This sequence belongs to the class V-like SAM-binding methyltransferase superfamily. Histone-lysine methyltransferase family. EZ subfamily. In terms of tissue distribution, widely expressed.

The protein localises to the nucleus. The catalysed reaction is L-lysyl(27)-[histone H3] + 3 S-adenosyl-L-methionine = N(6),N(6),N(6)-trimethyl-L-lysyl(27)-[histone H3] + 3 S-adenosyl-L-homocysteine + 3 H(+). Functionally, polycomb group (PcG) protein. Catalytic subunit of some PcG multiprotein complex, which methylates 'Lys-27' of histone H3, leading to transcriptional repression of the affected target genes. PcG proteins are not required to initiate repression, but to maintain it during later stages of development. This Zea mays (Maize) protein is Histone-lysine N-methyltransferase EZ1 (EZ1).